The chain runs to 230 residues: Large ribosomal subunit protein uL1 (230 aa).

The protein belongs to the universal ribosomal protein uL1 family. Part of the 50S ribosomal subunit.

Its function is as follows. Binds directly to 23S rRNA. The L1 stalk is quite mobile in the ribosome, and is involved in E site tRNA release. Protein L1 is also a translational repressor protein, it controls the translation of the L11 operon by binding to its mRNA. The protein is Large ribosomal subunit protein uL1 of Bifidobacterium adolescentis (strain ATCC 15703 / DSM 20083 / NCTC 11814 / E194a).